The chain runs to 156 residues: Acanthoscurrin-1 (156 aa).

Positions 1–23 (MAFRMKLVVCIVLLSTLAVMSSA) are cleaved as a signal peptide. Lys155 carries the post-translational modification Lysine amide.

As to expression, expressed in hemocytes and secreted into the plasma following bacterial immune challenge.

It is found in the secreted. Functionally, antimicrobial protein. Strong activity against the Gram-negative bacterium E.coli SBS363 and yeast C.albicans. No detectable activity against the Gram-positive bacterium M.luteus. The protein is Acanthoscurrin-1 of Acanthoscurria gomesiana (Tarantula spider).